Here is a 273-residue protein sequence, read N- to C-terminus: Large ribosomal subunit protein uL2 (273 aa).

Disordered regions lie at residues 28 to 53 (KPFA…TTRH) and 221 to 273 (RGTA…RRSK). Low complexity predominate over residues 39 to 48 (KSGGRNNNGR).

It belongs to the universal ribosomal protein uL2 family. In terms of assembly, part of the 50S ribosomal subunit. Forms a bridge to the 30S subunit in the 70S ribosome.

Functionally, one of the primary rRNA binding proteins. Required for association of the 30S and 50S subunits to form the 70S ribosome, for tRNA binding and peptide bond formation. It has been suggested to have peptidyltransferase activity; this is somewhat controversial. Makes several contacts with the 16S rRNA in the 70S ribosome. The chain is Large ribosomal subunit protein uL2 from Klebsiella pneumoniae (strain 342).